Reading from the N-terminus, the 173-residue chain is Crossover junction endodeoxyribonuclease RuvC (173 aa).

Residues aspartate 8, glutamate 67, and aspartate 139 contribute to the active site. Residues aspartate 8, glutamate 67, and aspartate 139 each contribute to the Mg(2+) site.

Belongs to the RuvC family. In terms of assembly, homodimer which binds Holliday junction (HJ) DNA. The HJ becomes 2-fold symmetrical on binding to RuvC with unstacked arms; it has a different conformation from HJ DNA in complex with RuvA. In the full resolvosome a probable DNA-RuvA(4)-RuvB(12)-RuvC(2) complex forms which resolves the HJ. Mg(2+) serves as cofactor.

The protein localises to the cytoplasm. It carries out the reaction Endonucleolytic cleavage at a junction such as a reciprocal single-stranded crossover between two homologous DNA duplexes (Holliday junction).. Its function is as follows. The RuvA-RuvB-RuvC complex processes Holliday junction (HJ) DNA during genetic recombination and DNA repair. Endonuclease that resolves HJ intermediates. Cleaves cruciform DNA by making single-stranded nicks across the HJ at symmetrical positions within the homologous arms, yielding a 5'-phosphate and a 3'-hydroxyl group; requires a central core of homology in the junction. The consensus cleavage sequence is 5'-(A/T)TT(C/G)-3'. Cleavage occurs on the 3'-side of the TT dinucleotide at the point of strand exchange. HJ branch migration catalyzed by RuvA-RuvB allows RuvC to scan DNA until it finds its consensus sequence, where it cleaves and resolves the cruciform DNA. The polypeptide is Crossover junction endodeoxyribonuclease RuvC (Vibrio campbellii (strain ATCC BAA-1116)).